The chain runs to 680 residues: Lipase 1 (680 aa).

The first 34 residues, 1 to 34, serve as a signal peptide directing secretion; sequence MKSQNKYSIRKFSVGASSILIATLLFLSGGQAQA. Positions 35 to 290 are excised as a propeptide; the sequence is AEKQVNMGNS…AKAKGDQTNK (256 aa). Disordered stretches follow at residues 39-58 and 82-260; these read VNMGNSQEDTVTAQSIGDQQ and KNLH…KNGL. Polar residues predominate over residues 40-58; it reads NMGNSQEDTVTAQSIGDQQ. The span at 84 to 112 shows a compositional bias: basic and acidic residues; that stretch reads LHNDKTISEENHRKTDDLNKDQLKDDKKS. 2 stretches are compositionally biased toward polar residues: residues 162-193 and 204-223; these read SQDLNANNNLPSQSRTKVSPSLNKSDQTSQRE and QPQQKNQANDKITDHNFNNE. Basic and acidic residues predominate over residues 224 to 234; sequence QEVKPQKDEKT. Residues 235-246 are compositionally biased toward polar residues; sequence LSVSDLKNNQKS. Ser408 serves as the catalytic Nucleophile. Asp600 (charge relay system) is an active-site residue. Ca(2+) is bound at residue Asp638. The active-site Charge relay system is the His639. 3 residues coordinate Ca(2+): Asp641, Asp646, and Asp649.

It belongs to the AB hydrolase superfamily. Lipase family.

It localises to the secreted. It catalyses the reaction a triacylglycerol + H2O = a diacylglycerol + a fatty acid + H(+). This is Lipase 1 (lip1) from Staphylococcus aureus (strain MRSA252).